The chain runs to 511 residues: uncharacterized protein (511 aa).

The region spanning I13–N45 is the LisH domain. The tract at residues P172–P212 is disordered. Residues N197–S210 show a composition bias toward polar residues.

This is an uncharacterized protein from Encephalitozoon cuniculi (strain GB-M1) (Microsporidian parasite).